The sequence spans 916 residues: Cadherin-4 (916 aa).

The signal sequence occupies residues 1 to 20 (MTAGAGVLLLLLSLSGALRA). Residues 21–169 (HNEDLTTRET…NANGLRRRKR (149 aa)) constitute a propeptide that is removed on maturation. The interval 124 to 168 (TSSPHSGHKPQKGKKVVALDPSPPPKDTLLPWPQHQNANGLRRRK) is disordered. Residues 129 to 138 (SGHKPQKGKK) show a composition bias toward basic residues. Cadherin domains are found at residues 170–277 (DWVI…RPEF), 278–392 (INQV…PPEF), 393–507 (TAST…APYF), 508–613 (PSNH…DNAP), and 614–724 (ELLP…TIGA). Residues 170–734 (DWVIPPINVP…VAAAGLGTGA (565 aa)) lie on the Extracellular side of the membrane. N-linked (GlcNAc...) asparagine glycosylation is found at asparagine 283, asparagine 412, asparagine 557, asparagine 632, asparagine 661, and asparagine 702. Residues 735-756 (IVAILICILILLTMVLLFVMWM) traverse the membrane as a helical segment. Residues 757–916 (KRREKERHTK…ADMYGGGEED (160 aa)) lie on the Cytoplasmic side of the membrane. Positions 806 to 838 (MGHVPSKAPGVRRVDERPVGAEPQYPIRPMVPH) are disordered.

In terms of tissue distribution, expressed mainly in brain but also found in other tissues.

Its subcellular location is the cell membrane. Cadherins are calcium-dependent cell adhesion proteins. They preferentially interact with themselves in a homophilic manner in connecting cells; cadherins may thus contribute to the sorting of heterogeneous cell types. May play an important role in retinal development. The polypeptide is Cadherin-4 (CDH4) (Homo sapiens (Human)).